A 286-amino-acid polypeptide reads, in one-letter code: ATP synthase gamma chain (286 aa).

It belongs to the ATPase gamma chain family. As to quaternary structure, F-type ATPases have 2 components, CF(1) - the catalytic core - and CF(0) - the membrane proton channel. CF(1) has five subunits: alpha(3), beta(3), gamma(1), delta(1), epsilon(1). CF(0) has three main subunits: a, b and c.

It is found in the cell inner membrane. Its function is as follows. Produces ATP from ADP in the presence of a proton gradient across the membrane. The gamma chain is believed to be important in regulating ATPase activity and the flow of protons through the CF(0) complex. The protein is ATP synthase gamma chain of Shewanella sp. (strain MR-4).